A 498-amino-acid chain; its full sequence is Oligopeptide transport system permease protein AmiC (498 aa).

The next 6 helical transmembrane spans lie at 12–32, 279–299, 316–336, 359–379, 415–435, and 461–481; these read SLVS…TLVP, MIVS…ALAV, LSTG…VYIV, SYVL…AIWI, MVPL…GATL, and VVGL…LGDI. The ABC transmembrane type-1 domain maps to 280 to 479; that stretch reads IVSSAITGLI…CISIFSRLLG (200 aa).

The protein belongs to the binding-protein-dependent transport system permease family. OppBC subfamily.

The protein resides in the cell membrane. Part of the binding-protein-dependent transport system for oligopeptides; probably responsible for the translocation of the substrate across the membrane. In Streptococcus pneumoniae serotype 4 (strain ATCC BAA-334 / TIGR4), this protein is Oligopeptide transport system permease protein AmiC (amiC).